The chain runs to 203 residues: Outer-membrane lipoprotein carrier protein (203 aa).

A signal peptide spans 1 to 21 (MKKLAITCALLSGMVVSQVWA).

It belongs to the LolA family. As to quaternary structure, monomer.

It is found in the periplasm. In terms of biological role, participates in the translocation of lipoproteins from the inner membrane to the outer membrane. Only forms a complex with a lipoprotein if the residue after the N-terminal Cys is not an aspartate (The Asp acts as a targeting signal to indicate that the lipoprotein should stay in the inner membrane). The sequence is that of Outer-membrane lipoprotein carrier protein from Klebsiella pneumoniae subsp. pneumoniae (strain ATCC 700721 / MGH 78578).